Here is a 1035-residue protein sequence, read N- to C-terminus: Probable LRR receptor-like serine/threonine-protein kinase At1g53440 (1035 aa).

An N-terminal signal peptide occupies residues 1–26 (MGFFFSTRKGLLLIIFICLDIFGSNA). Topologically, residues 27–607 (QLLPEDEVQT…VDTGKPLSNG (581 aa)) are extracellular. 4 N-linked (GlcNAc...) asparagine glycosylation sites follow: N46, N75, N83, and N110. LRR repeat units follow at residues 87–110 (VCRV…EFGN), 111–135 (LTRL…LSQI), 137–158 (LEIL…LGQI), 160–182 (TLTD…LGNL), 183–206 (RSLK…LSNL), 208–232 (NLTN…NWTR), and 234–254 (VRLD…ISNL). Residues N194, N208, and N229 are each glycosylated (N-linked (GlcNAc...) asparagine). N256 and N277 each carry an N-linked (GlcNAc...) asparagine glycan. LRR repeat units lie at residues 278 to 302 (MTNM…IGTS), 303 to 326 (MTML…TFRS), 328 to 349 (NAFN…QFIL), and 350 to 372 (DSKQ…SCNQ). N-linked (GlcNAc...) asparagine glycosylation is found at N317, N337, N361, N386, N469, and N559. The helical transmembrane segment at 608-628 (VVAGIVIAACVAFGLLVLVIL) threads the bilayer. Topologically, residues 629 to 1035 (RLTGYLGGKE…LDDLTDVEIE (407 aa)) are cytoplasmic. T656 carries the phosphothreonine modification. One can recognise a Protein kinase domain in the interval 667-948 (FDPENKIGEG…QGKIKVQPPL (282 aa)). ATP contacts are provided by residues 673–681 (IGEGGFGPV) and K695. Y740 is modified (phosphotyrosine). The Proton acceptor role is filled by D793. S826 is subject to Phosphoserine. 2 positions are modified to phosphothreonine: T827 and T832. Phosphotyrosine is present on Y840. Residues 969 to 1035 (LSQDSESQVS…LDDLTDVEIE (67 aa)) form a disordered region. The span at 972 to 981 (DSESQVSTYT) shows a compositional bias: polar residues. Low complexity predominate over residues 1009–1023 (SLLQQEEGNSSSSSR).

The protein belongs to the protein kinase superfamily. Ser/Thr protein kinase family.

It is found in the cell membrane. The catalysed reaction is L-seryl-[protein] + ATP = O-phospho-L-seryl-[protein] + ADP + H(+). It carries out the reaction L-threonyl-[protein] + ATP = O-phospho-L-threonyl-[protein] + ADP + H(+). The chain is Probable LRR receptor-like serine/threonine-protein kinase At1g53440 from Arabidopsis thaliana (Mouse-ear cress).